The sequence spans 570 residues: Proline--tRNA ligase (570 aa).

Belongs to the class-II aminoacyl-tRNA synthetase family. ProS type 1 subfamily. As to quaternary structure, homodimer.

It is found in the cytoplasm. It carries out the reaction tRNA(Pro) + L-proline + ATP = L-prolyl-tRNA(Pro) + AMP + diphosphate. Catalyzes the attachment of proline to tRNA(Pro) in a two-step reaction: proline is first activated by ATP to form Pro-AMP and then transferred to the acceptor end of tRNA(Pro). As ProRS can inadvertently accommodate and process non-cognate amino acids such as alanine and cysteine, to avoid such errors it has two additional distinct editing activities against alanine. One activity is designated as 'pretransfer' editing and involves the tRNA(Pro)-independent hydrolysis of activated Ala-AMP. The other activity is designated 'posttransfer' editing and involves deacylation of mischarged Ala-tRNA(Pro). The misacylated Cys-tRNA(Pro) is not edited by ProRS. This is Proline--tRNA ligase from Shewanella sp. (strain MR-4).